Reading from the N-terminus, the 260-residue chain is 5'-nucleotidase SurE (260 aa).

A divalent metal cation-binding residues include aspartate 13, aspartate 14, serine 44, and asparagine 102.

This sequence belongs to the SurE nucleotidase family. Requires a divalent metal cation as cofactor.

The protein resides in the cytoplasm. The enzyme catalyses a ribonucleoside 5'-phosphate + H2O = a ribonucleoside + phosphate. Nucleotidase that shows phosphatase activity on nucleoside 5'-monophosphates. The chain is 5'-nucleotidase SurE from Christiangramia forsetii (strain DSM 17595 / CGMCC 1.15422 / KT0803) (Gramella forsetii).